Consider the following 288-residue polypeptide: ATP synthase gamma chain (288 aa).

It belongs to the ATPase gamma chain family. F-type ATPases have 2 components, CF(1) - the catalytic core - and CF(0) - the membrane proton channel. CF(1) has five subunits: alpha(3), beta(3), gamma(1), delta(1), epsilon(1). CF(0) has three main subunits: a, b and c.

It localises to the cell inner membrane. In terms of biological role, produces ATP from ADP in the presence of a proton gradient across the membrane. The gamma chain is believed to be important in regulating ATPase activity and the flow of protons through the CF(0) complex. The chain is ATP synthase gamma chain from Actinobacillus pleuropneumoniae serotype 3 (strain JL03).